The primary structure comprises 238 residues: Ribonuclease PH (238 aa).

Phosphate is bound by residues Arg-86 and 124 to 126 (GTR).

This sequence belongs to the RNase PH family. Homohexameric ring arranged as a trimer of dimers.

The catalysed reaction is tRNA(n+1) + phosphate = tRNA(n) + a ribonucleoside 5'-diphosphate. In terms of biological role, phosphorolytic 3'-5' exoribonuclease that plays an important role in tRNA 3'-end maturation. Removes nucleotide residues following the 3'-CCA terminus of tRNAs; can also add nucleotides to the ends of RNA molecules by using nucleoside diphosphates as substrates, but this may not be physiologically important. Probably plays a role in initiation of 16S rRNA degradation (leading to ribosome degradation) during starvation. The sequence is that of Ribonuclease PH from Aliivibrio fischeri (strain ATCC 700601 / ES114) (Vibrio fischeri).